The sequence spans 446 residues: Sensor-type histidine kinase PrrB (446 aa).

2 helical membrane passes run 19-39 (VVATAIGAAIPVLIVGTVVWV) and 151-171 (LLICGFAIAAAAVFAWLLAAF). Residues 172 to 222 (AVRPFKQLAQQTRSVDAGGEAPRVEVHGATEAVEIAEAMRGMLQRIWNEQN) form the HAMP domain. A Histidine kinase domain is found at 237–446 (VSSHELRTPL…RLLLRISAPS (210 aa)). The residue at position 240 (histidine 240) is a Phosphohistidine; by autocatalysis.

Autophosphorylated.

Its subcellular location is the cell membrane. The enzyme catalyses ATP + protein L-histidine = ADP + protein N-phospho-L-histidine.. Its function is as follows. Member of the two-component regulatory system PrrB/PrrA that is involved specifically in early intracellular multiplication of Mycobacterium and is essential for its viability. Functions as a sensor protein kinase which is autophosphorylated at a histidine residue and transfers its phosphate group to the conserved aspartic acid residue in the regulatory domain of PrrA. In turn, PrrA binds to the upstream promoter regions of target genes including itself to positively regulate their expression. The chain is Sensor-type histidine kinase PrrB (prrB) from Mycobacterium leprae (strain TN).